A 198-amino-acid chain; its full sequence is ERTMTKDNNLLGKFELSGIPPAPRGVPQIEVTFDIDANGILNVSAVDKATGKENKITITNDKGRLSKEEIDRMINEADRYKSEDEKQKNRICAKNSLESYVYSMKQSVEGDEMKDKISESDRKNRILSKCEETIRWMDNNQLAEKEEFEEKKSELEKVCMPIITAMNRAGGGVPSGMPGGMPGAGGGGGKGPTIEEVD.

The span at 170-191 (GGGVPSGMPGGMPGAGGGGGKG) shows a compositional bias: gly residues. Residues 170–198 (GGGVPSGMPGGMPGAGGGGGKGPTIEEVD) form a disordered region.

Belongs to the heat shock protein 70 family.

This chain is Heat shock 70 kDa protein, found in Schistosoma japonicum (Blood fluke).